The following is a 626-amino-acid chain: DNA primase (626 aa).

Residues 39–63 form a CHC2-type zinc finger; sequence CPFHGEKTPSFSVSPEKQIFHCFGC. Positions 264 to 346 constitute a Toprim domain; the sequence is EEITLMEGFM…DVFVLQLPAG (83 aa). The Mg(2+) site is built by glutamate 270, aspartate 314, and aspartate 316.

Belongs to the DnaG primase family. In terms of assembly, monomer. Interacts with DnaB. It depends on Zn(2+) as a cofactor. Mg(2+) is required as a cofactor.

It catalyses the reaction ssDNA + n NTP = ssDNA/pppN(pN)n-1 hybrid + (n-1) diphosphate.. In terms of biological role, RNA polymerase that catalyzes the synthesis of short RNA molecules used as primers for DNA polymerase during DNA replication. In Listeria monocytogenes serovar 1/2a (strain ATCC BAA-679 / EGD-e), this protein is DNA primase.